The following is a 1400-amino-acid chain: DNA topoisomerase 2 (1400 aa).

Residues 1-30 show a composition bias toward low complexity; sequence MSSFESDSASDAESAFSDASSDFTPSSSVK. Residues 1–57 are disordered; that stretch reads MSSFESDSASDAESAFSDASSDFTPSSSVKSKGKVPLRDSTNTTAQPSAPATGDASD. The span at 39 to 57 shows a compositional bias: polar residues; it reads DSTNTTAQPSAPATGDASD. Residues Asn117, Asn146, 174-176, and 187-194 contribute to the ATP site; these read SSN and GRNGYGAK. An interaction with DNA region spans residues 379–386; the sequence is TKKEKGKK. An ATP-binding site is contributed by 415-417; sequence QTK. In terms of domain architecture, Toprim spans 497–613; sequence CTLILTEGDS…GLLEIPGFLL (117 aa). 3 residues coordinate Mg(2+): Glu503, Asp582, and Asp584. The 466-residue stretch at 749–1214 folds into the Topo IIA-type catalytic domain; the sequence is IPSILDGFKP…SAKDLWNSDL (466 aa). Catalysis depends on Tyr839, which acts as the O-(5'-phospho-DNA)-tyrosine intermediate. An interaction with DNA region spans residues 1019–1028; it reads KLISSISLSN. A disordered region spans residues 1235–1400; it reads FGPTAKTSTR…NESDEDYMSE (166 aa). Residues 1262-1271 are compositionally biased toward low complexity; sequence SSTPKASTPT. Residues 1312 to 1321 are compositionally biased toward basic residues; the sequence is PKRKTPKSKP. Residues 1389 to 1400 show a composition bias toward acidic residues; it reads DGNESDEDYMSE.

The protein belongs to the type II topoisomerase family. As to quaternary structure, homodimer. Mg(2+) is required as a cofactor. The cofactor is Mn(2+). It depends on Ca(2+) as a cofactor.

It is found in the nucleus. It catalyses the reaction ATP-dependent breakage, passage and rejoining of double-stranded DNA.. In terms of biological role, control of topological states of DNA by transient breakage and subsequent rejoining of DNA strands. Topoisomerase II makes double-strand breaks. In Meyerozyma guilliermondii (strain ATCC 6260 / CBS 566 / DSM 6381 / JCM 1539 / NBRC 10279 / NRRL Y-324) (Yeast), this protein is DNA topoisomerase 2 (TOP2).